A 457-amino-acid polypeptide reads, in one-letter code: Hepatocyte nuclear factor 3-beta (457 aa).

A transactivation domain 1 region spans residues 14 to 93 (DWSSYYAEPE…AGAMAGMGGS (80 aa)). The Nuclear localization signal signature appears at 106-113 (LSPSLSPL). A Phosphothreonine modification is found at T156. The fork-head DNA-binding region spans 159-252 (KPPYSYISLI…FENGCYLRRQ (94 aa)). Residues S212 and S283 each carry the phosphoserine modification. The span at 280-292 (AQASQAQLGEAAG) shows a compositional bias: low complexity. Residues 280 to 365 (AQASQAQLGE…PGLPPEAHLK (86 aa)) are disordered. Polar residues predominate over residues 298 to 310 (PAGTESPHSSASP). A Phosphothreonine modification is found at T301. Residues S303, S306, S307, and S309 each carry the phosphoserine modification. The segment covering 339–352 (PGQQQQAAAHLLGP) has biased composition (low complexity). The transactivation domain 2 stretch occupies residues 361–457 (EAHLKPEHHY…VYSRPIMNSS (97 aa)). 2 positions are modified to phosphoserine: S436 and S457.

In terms of assembly, binds DNA as a monomer. Binds TLE1. Interacts with FOXA1 and FOXA3. Interacts with PRKDC. Interacts with AKT1. Interacts with TET1; this interaction may recruit TET1 to specific genomic loci to mediate their demethylation. In terms of processing, phosphorylation on Thr-156 abolishes binding to target promoters and subsequent transcription activation upon insulin stimulation.

The protein resides in the nucleus. It is found in the cytoplasm. Transcription factor that is involved in embryonic development, establishment of tissue-specific gene expression and regulation of gene expression in differentiated tissues. Is thought to act as a 'pioneer' factor opening the compacted chromatin for other proteins through interactions with nucleosomal core histones and thereby replacing linker histones at target enhancer and/or promoter sites. Binds DNA with the consensus sequence 5'-[AC]A[AT]T[AG]TT[GT][AG][CT]T[CT]-3'. In embryonic development is required for notochord formation. Involved in the development of multiple endoderm-derived organ systems such as the liver, pancreas and lungs; FOXA1 and FOXA2 seem to have at least in part redundant roles. Originally described as a transcription activator for a number of liver genes such as AFP, albumin, tyrosine aminotransferase, PEPCK, etc. Interacts with the cis-acting regulatory regions of these genes. Involved in glucose homeostasis; regulates the expression of genes important for glucose sensing in pancreatic beta-cells and glucose homeostasis. Involved in regulation of fat metabolism. Binds to fibrinogen beta promoter and is involved in IL6-induced fibrinogen beta transcriptional activation. This Homo sapiens (Human) protein is Hepatocyte nuclear factor 3-beta (FOXA2).